We begin with the raw amino-acid sequence, 179 residues long: Large ribosomal subunit protein uL5 (179 aa).

This sequence belongs to the universal ribosomal protein uL5 family. As to quaternary structure, part of the 50S ribosomal subunit; part of the 5S rRNA/L5/L18/L25 subcomplex. Contacts the 5S rRNA and the P site tRNA. Forms a bridge to the 30S subunit in the 70S ribosome.

In terms of biological role, this is one of the proteins that bind and probably mediate the attachment of the 5S RNA into the large ribosomal subunit, where it forms part of the central protuberance. In the 70S ribosome it contacts protein S13 of the 30S subunit (bridge B1b), connecting the 2 subunits; this bridge is implicated in subunit movement. Contacts the P site tRNA; the 5S rRNA and some of its associated proteins might help stabilize positioning of ribosome-bound tRNAs. The chain is Large ribosomal subunit protein uL5 from Alkalilimnicola ehrlichii (strain ATCC BAA-1101 / DSM 17681 / MLHE-1).